A 397-amino-acid polypeptide reads, in one-letter code: MASEGITEIDSGLIETNYDNVVYKFDDLNLKPNIVRGIFGYGYETPSAIQQRAILPITEGRDVLAQAQSGTGKTATFTISALQRINENEKATQALILAPTRELALQIKNVITAIGLYLKVTVHASIGGTSMSDDIEAFRSGVQIVVGTPGRVLDMIERRYFKTDKVKMFILDEADEMLSSGFKEQIYNIFRLLPETTQIVLLSATMPQDVLEVTTKFMNNPVRILVKKDELTLEGIKQFYINVELEDYKFDCLCDLYDSISVTQAVIFCNTRSKVEFLTNKLREQHFTVSAIHADLPQAERDTIMKEFRSGSSRILISTDLLARGIDVQQVSLVINYDLPANKENYIHRIGRGGRFGRKGVAINFVTDRDVGMMREIEKFYSTQIEEMPADIGALFA.

The short motif at 23–51 (YKFDDLNLKPNIVRGIFGYGYETPSAIQQ) is the Q motif element. One can recognise a Helicase ATP-binding domain in the interval 54 to 224 (ILPITEGRDV…TKFMNNPVRI (171 aa)). 67–74 (AQSGTGKT) contacts ATP. A DEAD box motif is present at residues 172-175 (DEAD). The Helicase C-terminal domain occupies 235-396 (GIKQFYINVE…EMPADIGALF (162 aa)).

Belongs to the DEAD box helicase family. eIF4A subfamily. In terms of assembly, component of the eIF4F complex, which composition varies with external and internal environmental conditions. It is composed of at least eIF4A, eIF4E and eIF4G.

It localises to the cytoplasm. It carries out the reaction ATP + H2O = ADP + phosphate + H(+). ATP-dependent RNA helicase which is a subunit of the eIF4F complex involved in cap recognition and is required for mRNA binding to ribosome. In the current model of translation initiation, eIF4A unwinds RNA secondary structures in the 5'-UTR of mRNAs which is necessary to allow efficient binding of the small ribosomal subunit, and subsequent scanning for the initiator codon. The chain is ATP-dependent RNA helicase eIF4A (TIF1) from Candida albicans (strain SC5314 / ATCC MYA-2876) (Yeast).